We begin with the raw amino-acid sequence, 548 residues long: Synaptic vesicle 2-related protein (548 aa).

Over 1-87 (MEEDLFQLRQ…GFGRFQWKLS (87 aa)) the chain is Cytoplasmic. 2 positions are modified to phosphoserine: serine 25 and serine 31. A helical transmembrane segment spans residues 88 to 108 (VLTGLAWMADAMEMMILSILA). Over 109–122 (PQLHCEWRLPSWQV) the chain is Vesicular. The helical transmembrane segment at 123-143 (ALLTSVVFIGMMSSSTLWGNI) threads the bilayer. Residues 144 to 156 (SDQYGRKTGLKIS) are Cytoplasmic-facing. A helical transmembrane segment spans residues 157–177 (VFWTLYYGILSAFAPVYSWIL). Residues 178 to 180 (VLR) lie on the Vesicular side of the membrane. Residues 181 to 201 (GLVGFGIGGVPQSVTLYAEFL) form a helical membrane-spanning segment. Over 202-209 (PMKARAKC) the chain is Cytoplasmic. Residues 210–230 (ILLIEVFWAIGTVFEVLLAVF) form a helical membrane-spanning segment. Over 231 to 238 (VMPSLGWR) the chain is Vesicular. The helical transmembrane segment at 239-259 (WLLLLSAAPLLVFAVLCFWLP) threads the bilayer. The Cytoplasmic segment spans residues 260–316 (ESARYDVLSGNQEKAIATLKRIATENGAPMPLGKLIISRQEDRGKMRDLFTPHFRWT). The helical transmembrane segment at 317–337 (TLLLWFIWFSNAFSYYGLVLL) threads the bilayer. Residues 338 to 373 (TTELFQAGDVCSISSRKKAVEAKCSLACEYLSKEDY) are Vesicular-facing. The helical transmembrane segment at 374–394 (MDLLWTTLSEFPGVLVTLWVI) threads the bilayer. Over 395–401 (DRLGRKK) the chain is Cytoplasmic. Residues 402–422 (TMALCFVIFSLCSLLLFICIG) traverse the membrane as a helical segment. The Vesicular segment spans residues 423–424 (RN). The chain crosses the membrane as a helical span at residues 425–445 (VLTLLLFIARAFISGGFQAAY). Residues 446 to 457 (VYTPEVYPTATR) are Cytoplasmic-facing. A helical membrane pass occupies residues 458-478 (ALGLGTCSGMARVGALITPFI). At 479–489 (AQVMLESSVYL) the chain is on the vesicular side. The chain crosses the membrane as a helical span at residues 490-510 (TLAVYSGCCLLAALASCFLPI). Residues 511–548 (ETKGRALQESSHREWGQEMVGRGTNSTGVPRSNSGSQE) are Cytoplasmic-facing. The segment at 523-548 (REWGQEMVGRGTNSTGVPRSNSGSQE) is disordered. The segment covering 533 to 548 (GTNSTGVPRSNSGSQE) has biased composition (polar residues). Serine 542 carries the post-translational modification Phosphoserine.

The protein belongs to the major facilitator superfamily. In terms of tissue distribution, detected in brain (at protein level). Detected in brain, in synaptic layers of the cerebellum, hippocampus and cerebral cortex.

It is found in the cytoplasmic vesicle. Its subcellular location is the secretory vesicle. It localises to the synaptic vesicle membrane. The chain is Synaptic vesicle 2-related protein (Svop) from Rattus norvegicus (Rat).